The chain runs to 1960 residues: Myosin-9 (1960 aa).

Ala-2 carries the N-acetylalanine modification. The interval 2-838 (AQQAADKYLY…RLFTKVKPLL (837 aa)) is mediates interaction with LIMCH1. Lys-8 carries the N6-acetyllysine modification. A Phosphotyrosine modification is found at Tyr-11. The 51-residue stretch at 27-77 (AAKKLVWVPSSKNGFEPASLKEEVGEEAIVELVENGKKVKVNKDDIQKMNP) folds into the Myosin N-terminal SH3-like domain. The region spanning 81–776 (SKVEDMAELT…VLAHLEEERD (696 aa)) is the Myosin motor domain. Lys-102 bears the N6-acetyllysine mark. Position 174–181 (174–181 (GESGAGKT)) interacts with ATP. Residues Lys-299, Lys-435, and Lys-613 each carry the N6-acetyllysine modification. Ser-628 is modified (phosphoserine). The actin-binding stretch occupies residues 654 to 676 (LAKLMATLRNTNPNFVRCIIPNH). Phosphotyrosine is present on Tyr-754. In terms of domain architecture, IQ spans 779-808 (ITDVIIGFQACCRGYLARKAFAKRQQQLTA). Residues 841 to 1926 (IRHEDELLAK…LKNKLRRGDL (1086 aa)) adopt a coiled-coil conformation. An N6-succinyllysine modification is found at Lys-850. N6-acetyllysine occurs at positions 860, 975, and 1024. The segment covering 1035-1055 (RLRREEKQRQELEKTRRKLEG) has biased composition (basic and acidic residues). The segment at 1035–1057 (RLRREEKQRQELEKTRRKLEGDS) is disordered. Ser-1114 bears the Phosphoserine mark. The interval 1117–1167 (QEDLESERASRNKAEKQKRDLGEELEALKTELEDTLDSTAAQQELRSKREQ) is disordered. The span at 1122 to 1148 (SERASRNKAEKQKRDLGEELEALKTEL) shows a compositional bias: basic and acidic residues. Residues Lys-1234 and Lys-1249 each carry the N6-acetyllysine modification. The disordered stretch occupies residues 1327–1352 (LSTKLKQMEDEKNSFREQLEEEEEAK). The segment covering 1332–1352 (KQMEDEKNSFREQLEEEEEAK) has biased composition (basic and acidic residues). N6-acetyllysine is present on residues Lys-1357, Lys-1392, Lys-1404, Lys-1410, Lys-1459, and Lys-1638. Lys-1669 is subject to N6-succinyllysine. The residue at position 1714 (Ser-1714) is a Phosphoserine. A disordered region spans residues 1768–1788 (LERSHAQKNENARQQLERQNK). An N6-acetyllysine mark is found at Lys-1793, Lys-1802, and Lys-1845. Residues 1877–1908 (RQLEEAEEEAQRANASRRKLQRELEDATETAD) are disordered. Omega-N-methylarginine is present on Arg-1923. Thr-1939 is subject to Phosphothreonine. Residues 1939-1960 (TGDCSDEEVDGKADGADAKAAE) form a disordered region. A Phosphoserine modification is found at Ser-1943. Residues 1948-1960 (DGKADGADAKAAE) show a composition bias toward basic and acidic residues.

Belongs to the TRAFAC class myosin-kinesin ATPase superfamily. Myosin family. Myosin is a hexameric protein that consists of 2 heavy chain subunits (MHC), 2 alkali light chain subunits (MLC) and 2 regulatory light chain subunits (MLC-2). Interacts with RASIP1. Interacts with DDR1. Interacts with PDLIM2. Interacts with SVIL. Interacts with HTRA3. Interacts with Myo7a. Interacts with CFAP95. Interacts with LIMCH1; independently of the integration of MYH9 into the myosin complex. Interacts with RAB3A. Interacts with ZBED4. Interacts with S100A4; this interaction increases cell motility. Post-translationally, ISGylated. In terms of processing, ubiquitination.

It localises to the cytoplasm. Its subcellular location is the cytoskeleton. It is found in the cell cortex. The protein resides in the cytoplasmic vesicle. The protein localises to the secretory vesicle. It localises to the cortical granule. Its function is as follows. Cellular myosin that appears to play a role in cytokinesis, cell shape, and specialized functions such as secretion and capping. Required for cortical actin clearance prior to oocyte exocytosis. Promotes cell motility in conjunction with S100A4. During cell spreading, plays an important role in cytoskeleton reorganization, focal contact formation (in the margins but not the central part of spreading cells), and lamellipodial retraction; this function is mechanically antagonized by MYH10. This Mus musculus (Mouse) protein is Myosin-9 (Myh9).